The following is a 419-amino-acid chain: Interferon regulatory factor 3 (419 aa).

Position 3 is a phosphothreonine (Thr-3). The segment at residues 5 to 111 (KPRILPWLVS…DPHKVYEFVT (107 aa)) is a DNA-binding region (IRF tryptophan pentad repeat). Residue Ser-14 is modified to Phosphoserine. Thr-75 is subject to Phosphothreonine. 3 positions are modified to phosphoserine: Ser-97, Ser-123, and Ser-135. The segment at 140–419 (PKLFDGLILG…DMDFQATGNI (280 aa)) is mediates interaction with ZDHHC11. Lys-188 participates in a covalent cross-link: Glycyl lysine isopeptide (Lys-Gly) (interchain with G-Cter in ISG15). Residues 194-353 (EQWEFEVTAF…MWPQDQPWVK (160 aa)) form an interaction with HERC5 region. Residues Thr-230, Thr-237, and Thr-246 each carry the phosphothreonine modification. Glycyl lysine isopeptide (Lys-Gly) (interchain with G-Cter in ISG15) cross-links involve residues Lys-353 and Lys-359. Lys-359 is modified (N6-acetyllysine). Ser-378 is subject to Phosphoserine. At Ser-379 the chain carries Diphosphoserine. Phosphoserine; by TBK1 is present on Ser-379. Residue Ser-388 is modified to Phosphoserine; by IKKE. Ser-390 is subject to Phosphoserine. The residue at position 396 (Thr-396) is a Phosphothreonine.

Belongs to the IRF family. As to quaternary structure, monomer. Homodimer; phosphorylation-induced. Interacts (when phosphorylated) with CREBBP. Interacts with MAVS (via phosphorylated pLxIS motif). Interacts with TICAM1 (via phosphorylated pLxIS motif). Interacts with STING1 (via phosphorylated pLxIS motif). Interacts with IKBKE and TBK1. Interacts with TICAM2. Interacts with RBCK1. Interacts with HERC5. Interacts with DDX3X; the interaction allows the phosphorylation and activation of IRF3 by IKBKE. Interacts with TRIM21 and ULK1, in the presence of TRIM21; this interaction leads to IRF3 degradation by autophagy. Interacts with RIOK3; RIOK3 probably mediates the interaction of TBK1 with IRF3. Interacts with ILRUN; the interaction inhibits IRF3 binding to its DNA consensus sequence. Interacts with LYAR; this interaction impairs IRF3 DNA-binding activity. Interacts with TRAF3. Interacts with ZDHHC11; ZDHHC11 recruits IRF3 to STING1 upon DNA virus infection and thereby promotes IRF3 activation. Interacts with HSP90AA1; the interaction mediates IRF3 association with TOMM70. Interacts with BCL2; the interaction decreases upon Sendai virus infection. Interacts with BAX; the interaction is direct, increases upon virus infection and mediates the formation of the apoptosis complex TOMM70:HSP90AA1:IRF3:BAX. Interacts with DDX56. Interacts with NBR1. In terms of processing, constitutively phosphorylated on many Ser/Thr residues. Activated following phosphorylation by TBK1 and IKBKE. Innate adapter proteins, such as MAVS, STING1 or TICAM1, are first activated by viral RNA, cytosolic DNA, and bacterial lipopolysaccharide (LPS), respectively, leading to activation of the kinases TBK1 and IKBKE. These kinases then phosphorylate the adapter proteins on the pLxIS motif, leading to recruitment of IRF3, thereby licensing IRF3 for phosphorylation by TBK1. Phosphorylation at Ser-379 is followed by pyrophosphorylation at the same residue, promoting phosphorylation at Ser-388. Phosphorylated IRF3 dissociates from the adapter proteins, dimerizes, and then enters the nucleus to induce IFNs. Post-translationally, pyrophosphorylated by UAP1 following phosphorylation at Ser-379 by TBK1. Pyrophosphorylation promotes subsequent phosphorylation at Ser-388, leading to homodimerization of IRF3. Acetylation at Lys-359 by KAT8 inhibits recruimtent to promoters and transcription factor activity. Acetylation by KAT8 is promoted by phosphorylation at Ser-388. In terms of processing, ubiquitinated; ubiquitination involves RBCK1 leading to proteasomal degradation. Polyubiquitinated; ubiquitination involves TRIM21 leading to proteasomal degradation. Ubiquitinated by UBE3C, leading to its degradation. Deubiquitinated by USP5 on both 'Lys-48'-linked unanchored and 'Lys-63'-linked anchored polyubiquitin, leading to inhibition of anti-RNA viral innate immunity. Post-translationally, ISGylated by HERC5 resulting in sustained IRF3 activation and in the inhibition of IRF3 ubiquitination by disrupting PIN1 binding. The phosphorylation state of IRF3 does not alter ISGylation. Proteolytically cleaved by apoptotic caspases during apoptosis, leading to its inactivation. Cleavage by CASP3 during virus-induced apoptosis inactivates it, preventing cytokine overproduction.

The protein localises to the cytoplasm. The protein resides in the nucleus. It is found in the mitochondrion. With respect to regulation, in the absence of viral infection, maintained as a monomer in an autoinhibited state. Phosphorylation by TBK1 and IKBKE disrupts this autoinhibition leading to the liberation of the DNA-binding and dimerization activities and its nuclear localization where it can activate type I IFN and ISG genes. Phosphorylation and activation follow the following steps: innate adapter proteins, such as MAVS, STING1 or TICAM1, are first activated by viral RNA, cytosolic DNA and bacterial lipopolysaccharide (LPS), respectively, leading to activation of the kinases TBK1 and IKBKE. These kinases then phosphorylate the adapter proteins on their pLxIS motif, leading to recruitment of IRF3, thereby licensing IRF3 for phosphorylation by TBK1. Phosphorylated IRF3 dissociates from the adapter proteins, dimerizes, and then enters the nucleus to induce IFNs. Its function is as follows. Key transcriptional regulator of type I interferon (IFN)-dependent immune responses which plays a critical role in the innate immune response against DNA and RNA viruses. Regulates the transcription of type I IFN genes (IFN-alpha and IFN-beta) and IFN-stimulated genes (ISG) by binding to an interferon-stimulated response element (ISRE) in their promoters. Acts as a more potent activator of the IFN-beta (IFNB) gene than the IFN-alpha (IFNA) gene and plays a critical role in both the early and late phases of the IFNA/B gene induction. Found in an inactive form in the cytoplasm of uninfected cells and following viral infection, double-stranded RNA (dsRNA), or toll-like receptor (TLR) signaling, is phosphorylated by IKBKE and TBK1 kinases. This induces a conformational change, leading to its dimerization and nuclear localization and association with CREB binding protein (CREBBP) to form dsRNA-activated factor 1 (DRAF1), a complex which activates the transcription of the type I IFN and ISG genes. Can activate distinct gene expression programs in macrophages and can induce significant apoptosis in primary macrophages. The protein is Interferon regulatory factor 3 (Irf3) of Mus musculus (Mouse).